A 107-amino-acid polypeptide reads, in one-letter code: Urease subunit beta (107 aa).

It belongs to the urease beta subunit family. As to quaternary structure, heterotrimer of UreA (gamma), UreB (beta) and UreC (alpha) subunits. Three heterotrimers associate to form the active enzyme.

Its subcellular location is the cytoplasm. It carries out the reaction urea + 2 H2O + H(+) = hydrogencarbonate + 2 NH4(+). Its pathway is nitrogen metabolism; urea degradation; CO(2) and NH(3) from urea (urease route): step 1/1. This is Urease subunit beta from Escherichia coli.